A 321-amino-acid polypeptide reads, in one-letter code: HYKKRKAQEKGLPEPTVTNEEYVEELKKGILDMGIKLLFSKVKSLLKKLKNKIFPKKKEDNQAVDTKSMEEPKVKAQPALRGVEPTEDSNIMNSINNVMDEIDFFEKELIENNNTPNVVPPTQSKKKNKNETVSGMDENFDNHPENYFKEEYYYDENDDMEVKVKKIGVTLKKFEPLKNGNVSETIKLIHLGNKDKKHIEAINNDIQIIKQELQAIYNELMNYTNGNKNIQQIFQQNILENDVLNQETEEEMEKQVEAITKQIEAEVDALAPKNKEEEEKEKEKEKEKEEKEKEEKEKEKEEKEKEEKEKEEKEEKEEEKK.

Basic and acidic residues predominate over residues Lys-58–Val-74. 3 disordered regions span residues Lys-58–Asp-88, Asn-113–Asp-141, and Ile-263–Lys-321. Low complexity predominate over residues Asn-113–Thr-122. Residues Lys-273 to Lys-321 show a composition bias toward basic and acidic residues.

It belongs to the plasmodium ABRA family. As to quaternary structure, forms a complex composed of MSP1, MSP6, MSP7, MSP9 and MSP3; within the complex, MSP6 and MSP9 mediate the binding to the host erythrocyte. Interacts with MSP1 subunits p19 and p42; the interaction is direct. Interacts with host SLC4A1/Band 3 protein (via the 5ABC region). MSP1 subunits p19 or p42, and MSP9 form a co-ligand complex that interacts with host SLC4A1/Band 3 protein. In terms of processing, not glycosylated.

It localises to the cell membrane. The protein resides in the parasitophorous vacuole lumen. Its subcellular location is the secreted. In terms of biological role, during the asexual blood stage, involved in the sialic acid-independent (SAID) merozoite invasion of host erythrocytes by binding to host SLC4A1/Band 3 protein on the surface of the host erythrocyte. The sequence is that of Merozoite surface protein 9 from Plasmodium falciparum (isolate FC27 / Papua New Guinea).